A 76-amino-acid chain; its full sequence is DNA-directed RNA polymerase subunit omega (76 aa).

It belongs to the RNA polymerase subunit omega family. The RNAP catalytic core consists of 2 alpha, 1 beta, 1 beta' and 1 omega subunit. When a sigma factor is associated with the core the holoenzyme is formed, which can initiate transcription.

The catalysed reaction is RNA(n) + a ribonucleoside 5'-triphosphate = RNA(n+1) + diphosphate. Its function is as follows. Promotes RNA polymerase assembly. Latches the N- and C-terminal regions of the beta' subunit thereby facilitating its interaction with the beta and alpha subunits. In Staphylococcus carnosus (strain TM300), this protein is DNA-directed RNA polymerase subunit omega.